The primary structure comprises 72 residues: Large ribosomal subunit protein bL31 (72 aa).

Cysteine 16, cysteine 18, cysteine 38, and cysteine 41 together coordinate Zn(2+).

This sequence belongs to the bacterial ribosomal protein bL31 family. Type A subfamily. Part of the 50S ribosomal subunit. Zn(2+) serves as cofactor.

Functionally, binds the 23S rRNA. In Francisella tularensis subsp. holarctica (strain LVS), this protein is Large ribosomal subunit protein bL31.